Reading from the N-terminus, the 209-residue chain is Probable septum site-determining protein MinC (209 aa).

The protein belongs to the MinC family. In terms of assembly, interacts with MinD and FtsZ.

In terms of biological role, cell division inhibitor that blocks the formation of polar Z ring septums. Rapidly oscillates between the poles of the cell to destabilize FtsZ filaments that have formed before they mature into polar Z rings. Prevents FtsZ polymerization. The polypeptide is Probable septum site-determining protein MinC (Clostridium kluyveri (strain NBRC 12016)).